Consider the following 121-residue polypeptide: UPF0738 protein RBAM_011600 (121 aa).

Belongs to the UPF0738 family.

In Bacillus velezensis (strain DSM 23117 / BGSC 10A6 / LMG 26770 / FZB42) (Bacillus amyloliquefaciens subsp. plantarum), this protein is UPF0738 protein RBAM_011600.